We begin with the raw amino-acid sequence, 370 residues long: Dual-specificity RNA methyltransferase RlmN (370 aa).

Catalysis depends on Glu-97, which acts as the Proton acceptor. A Radical SAM core domain is found at 103 to 340 (EKSRGTLCIS…CTVRRTRGDD (238 aa)). Residues Cys-110 and Cys-345 are joined by a disulfide bond. [4Fe-4S] cluster is bound by residues Cys-117, Cys-121, and Cys-124. S-adenosyl-L-methionine is bound by residues 170–171 (GE), Ser-202, 224–226 (SLH), and Asn-302. Cys-345 (S-methylcysteine intermediate) is an active-site residue.

This sequence belongs to the radical SAM superfamily. RlmN family. It depends on [4Fe-4S] cluster as a cofactor.

The protein localises to the cytoplasm. It carries out the reaction adenosine(2503) in 23S rRNA + 2 reduced [2Fe-2S]-[ferredoxin] + 2 S-adenosyl-L-methionine = 2-methyladenosine(2503) in 23S rRNA + 5'-deoxyadenosine + L-methionine + 2 oxidized [2Fe-2S]-[ferredoxin] + S-adenosyl-L-homocysteine. It catalyses the reaction adenosine(37) in tRNA + 2 reduced [2Fe-2S]-[ferredoxin] + 2 S-adenosyl-L-methionine = 2-methyladenosine(37) in tRNA + 5'-deoxyadenosine + L-methionine + 2 oxidized [2Fe-2S]-[ferredoxin] + S-adenosyl-L-homocysteine. Functionally, specifically methylates position 2 of adenine 2503 in 23S rRNA and position 2 of adenine 37 in tRNAs. m2A2503 modification seems to play a crucial role in the proofreading step occurring at the peptidyl transferase center and thus would serve to optimize ribosomal fidelity. This is Dual-specificity RNA methyltransferase RlmN from Hydrogenovibrio crunogenus (strain DSM 25203 / XCL-2) (Thiomicrospira crunogena).